We begin with the raw amino-acid sequence, 234 residues long: Ribonuclease HII (234 aa).

In terms of domain architecture, RNase H type-2 spans 16 to 207 (ALVAGVDEAG…VRRMLTPKAI (192 aa)). 3 residues coordinate a divalent metal cation: Asp-22, Glu-23, and Asp-115.

This sequence belongs to the RNase HII family. It depends on Mn(2+) as a cofactor. Mg(2+) serves as cofactor.

The protein localises to the cytoplasm. The enzyme catalyses Endonucleolytic cleavage to 5'-phosphomonoester.. In terms of biological role, endonuclease that specifically degrades the RNA of RNA-DNA hybrids. The polypeptide is Ribonuclease HII (Xylella fastidiosa (strain M12)).